The following is a 157-amino-acid chain: Endosomal/vacuolar adapter protein YPT35 (157 aa).

The 115-residue stretch at Ile43–Asn157 folds into the PX domain.

This sequence belongs to the YPT35 family.

It localises to the endosome membrane. The protein localises to the vacuole membrane. Recruits the lipid transfer protein VPS13 to endosomal and vacuolar membranes. The chain is Endosomal/vacuolar adapter protein YPT35 (YPT35) from Debaryomyces hansenii (strain ATCC 36239 / CBS 767 / BCRC 21394 / JCM 1990 / NBRC 0083 / IGC 2968) (Yeast).